The chain runs to 58 residues: MAKTIVHENESIDDALRRFKRSVSRSGTLQEYRKREFYEKPSVKRKLKSEAARKRRHY.

The protein belongs to the bacterial ribosomal protein bS21 family.

The protein is Small ribosomal subunit protein bS21 of Lactobacillus johnsonii (strain CNCM I-12250 / La1 / NCC 533).